Here is a 75-residue protein sequence, read N- to C-terminus: Small ribosomal subunit protein bS18 (75 aa).

The protein belongs to the bacterial ribosomal protein bS18 family. As to quaternary structure, part of the 30S ribosomal subunit. Forms a tight heterodimer with protein bS6.

Functionally, binds as a heterodimer with protein bS6 to the central domain of the 16S rRNA, where it helps stabilize the platform of the 30S subunit. The protein is Small ribosomal subunit protein bS18 of Cereibacter sphaeroides (strain ATCC 17029 / ATH 2.4.9) (Rhodobacter sphaeroides).